Consider the following 262-residue polypeptide: Carbohydrate deacetylase (262 aa).

His-129 lines the Mg(2+) pocket.

Belongs to the YdjC deacetylase family. As to quaternary structure, homodimer. Mg(2+) serves as cofactor.

Its function is as follows. Probably catalyzes the deacetylation of acetylated carbohydrates an important step in the degradation of oligosaccharides. In Enterococcus faecalis (strain ATCC 700802 / V583), this protein is Carbohydrate deacetylase.